Reading from the N-terminus, the 318-residue chain is Sucrose operon repressor (318 aa).

The HTH lacI-type domain occupies methionine 1–glycine 56. The H-T-H motif DNA-binding region spans leucine 4 to asparagine 23.

This protein may control the expression of the genes that are involved in the transport and catabolism of sucrose. This Lactococcus lactis subsp. lactis (Streptococcus lactis) protein is Sucrose operon repressor (sacR).